Here is a 213-residue protein sequence, read N- to C-terminus: Orotate phosphoribosyltransferase (213 aa).

Lys-26 provides a ligand contact to 5-phospho-alpha-D-ribose 1-diphosphate. Position 34–35 (34–35 (FF)) interacts with orotate. 5-phospho-alpha-D-ribose 1-diphosphate is bound by residues 72–73 (YK), Arg-99, Lys-100, Lys-103, His-105, and 124–132 (DDVITAGTA). Orotate is bound by residues Thr-128 and Arg-156.

The protein belongs to the purine/pyrimidine phosphoribosyltransferase family. PyrE subfamily. As to quaternary structure, homodimer. It depends on Mg(2+) as a cofactor.

The enzyme catalyses orotidine 5'-phosphate + diphosphate = orotate + 5-phospho-alpha-D-ribose 1-diphosphate. It participates in pyrimidine metabolism; UMP biosynthesis via de novo pathway; UMP from orotate: step 1/2. In terms of biological role, catalyzes the transfer of a ribosyl phosphate group from 5-phosphoribose 1-diphosphate to orotate, leading to the formation of orotidine monophosphate (OMP). This chain is Orotate phosphoribosyltransferase, found in Cronobacter sakazakii (strain ATCC BAA-894) (Enterobacter sakazakii).